Here is a 294-residue protein sequence, read N- to C-terminus: Lysozyme M1 (294 aa).

Residues 81-294 (GVQGIDVSHW…RLLALANNTA (214 aa)) form the Ch-type lysozyme domain. Residues aspartate 86, aspartate 175, and glutamate 177 contribute to the active site. The cysteines at positions 185 and 224 are disulfide-linked.

The protein belongs to the glycosyl hydrolase 25 family.

It is found in the secreted. The catalysed reaction is Hydrolysis of (1-&gt;4)-beta-linkages between N-acetylmuramic acid and N-acetyl-D-glucosamine residues in a peptidoglycan and between N-acetyl-D-glucosamine residues in chitodextrins.. Its function is as follows. This enzyme has both lysozyme (acetylmuramidase) and diacetylmuramidase activities. The sequence is that of Lysozyme M1 (acm) from Streptomyces globisporus.